A 340-amino-acid chain; its full sequence is Glycerol-3-phosphate dehydrogenase [NAD(P)+] (340 aa).

NADPH is bound by residues serine 14, tyrosine 15, histidine 35, and lysine 109. Residues lysine 109, glycine 138, and threonine 140 each coordinate sn-glycerol 3-phosphate. Alanine 142 lines the NADPH pocket. Residues lysine 194, aspartate 247, serine 257, arginine 258, and asparagine 259 each contribute to the sn-glycerol 3-phosphate site. Lysine 194 functions as the Proton acceptor in the catalytic mechanism. Arginine 258 is an NADPH binding site. Positions 282 and 284 each coordinate NADPH.

This sequence belongs to the NAD-dependent glycerol-3-phosphate dehydrogenase family.

The protein resides in the cytoplasm. The catalysed reaction is sn-glycerol 3-phosphate + NAD(+) = dihydroxyacetone phosphate + NADH + H(+). The enzyme catalyses sn-glycerol 3-phosphate + NADP(+) = dihydroxyacetone phosphate + NADPH + H(+). The protein operates within membrane lipid metabolism; glycerophospholipid metabolism. Functionally, catalyzes the reduction of the glycolytic intermediate dihydroxyacetone phosphate (DHAP) to sn-glycerol 3-phosphate (G3P), the key precursor for phospholipid synthesis. The polypeptide is Glycerol-3-phosphate dehydrogenase [NAD(P)+] (Photorhabdus laumondii subsp. laumondii (strain DSM 15139 / CIP 105565 / TT01) (Photorhabdus luminescens subsp. laumondii)).